The chain runs to 191 residues: Adenylate kinase (191 aa).

Residue 11 to 16 (GAGKGT) participates in ATP binding. The interval 31–60 (STGDILRSNVAERSPLGIKAKDYMDKGDLV) is NMP. AMP-binding positions include threonine 32, arginine 37, 58–60 (DLV), 86–89 (GFPR), and glutamine 93. The tract at residues 132–138 (SRKREDD) is LID. An ATP-binding site is contributed by arginine 133. AMP is bound by residues arginine 135 and arginine 146. An ATP-binding site is contributed by asparagine 174.

The protein belongs to the adenylate kinase family. In terms of assembly, monomer.

It localises to the cytoplasm. The catalysed reaction is AMP + ATP = 2 ADP. The protein operates within purine metabolism; AMP biosynthesis via salvage pathway; AMP from ADP: step 1/1. Its function is as follows. Catalyzes the reversible transfer of the terminal phosphate group between ATP and AMP. Plays an important role in cellular energy homeostasis and in adenine nucleotide metabolism. The polypeptide is Adenylate kinase (Trichodesmium erythraeum (strain IMS101)).